The chain runs to 484 residues: Trigger factor (484 aa).

Residues 162–243 form the PPIase FKBP-type domain; the sequence is GDFISIDLSA…VKSVKERELP (82 aa). The disordered stretch occupies residues 427–484; it reads DGNTIDTSEFFGKPPENDVTDLLDDDADGDAGVDADGDTENSAEPADADSADTAQGAG. Residues 444–476 are compositionally biased toward acidic residues; the sequence is DVTDLLDDDADGDAGVDADGDTENSAEPADADS.

The protein belongs to the FKBP-type PPIase family. Tig subfamily.

It is found in the cytoplasm. It catalyses the reaction [protein]-peptidylproline (omega=180) = [protein]-peptidylproline (omega=0). Functionally, involved in protein export. Acts as a chaperone by maintaining the newly synthesized protein in an open conformation. Functions as a peptidyl-prolyl cis-trans isomerase. This is Trigger factor from Mycobacterium ulcerans (strain Agy99).